The chain runs to 132 residues: MVMTDPIADFLTRIRNANQAKHEVLEVPASNIKKGIAEILKREGFVKNVEVIEDDKQGIIRVFLKYGQNGERVITNLKRISKPGLRVYSKREDIPKVLNGLGIAIISTSEGLLTDKEARQKNVGGEVIAYVW.

Belongs to the universal ribosomal protein uS8 family. As to quaternary structure, part of the 30S ribosomal subunit. Contacts proteins S5 and S12.

Functionally, one of the primary rRNA binding proteins, it binds directly to 16S rRNA central domain where it helps coordinate assembly of the platform of the 30S subunit. This Streptococcus thermophilus (strain CNRZ 1066) protein is Small ribosomal subunit protein uS8.